Consider the following 376-residue polypeptide: DNA methyltransferase CcrM (376 aa).

Positions 273-370 (KATLSVMTGK…IDELRSVIRN (98 aa)) constitute an RAMA domain.

It belongs to the N(4)/N(6)-methyltransferase family.

It catalyses the reaction a 2'-deoxyadenosine in DNA + S-adenosyl-L-methionine = an N(6)-methyl-2'-deoxyadenosine in DNA + S-adenosyl-L-homocysteine + H(+). A beta subtype methylase that recognizes the double-stranded sequence 5'-GANTC-3' and methylates A-2 on both strands. Overexpression leads to many branched and bloated cells, two to three times the size of wild-type cells, and cells that have 1-3 times the normal amount of DNA. Contributes to the accurate cell-cycle control of DNA replication and cellular morphology. Can fully replace its ortholog in C.crescentus. This chain is DNA methyltransferase CcrM (smeIM), found in Rhizobium meliloti (strain 1021) (Ensifer meliloti).